A 433-amino-acid polypeptide reads, in one-letter code: 3-phosphoshikimate 1-carboxyvinyltransferase (433 aa).

3-phosphoshikimate-binding residues include Lys22, Ser23, and Arg27. Lys22 serves as a coordination point for phosphoenolpyruvate. Residues Gly94 and Arg122 each contribute to the phosphoenolpyruvate site. Ser168, Ser169, Gln170, Ser196, Asp319, and Lys346 together coordinate 3-phosphoshikimate. Gln170 serves as a coordination point for phosphoenolpyruvate. The Proton acceptor role is filled by Asp319. Arg350, Arg394, and Lys418 together coordinate phosphoenolpyruvate.

Belongs to the EPSP synthase family. Monomer.

The protein localises to the cytoplasm. The catalysed reaction is 3-phosphoshikimate + phosphoenolpyruvate = 5-O-(1-carboxyvinyl)-3-phosphoshikimate + phosphate. Its pathway is metabolic intermediate biosynthesis; chorismate biosynthesis; chorismate from D-erythrose 4-phosphate and phosphoenolpyruvate: step 6/7. Functionally, catalyzes the transfer of the enolpyruvyl moiety of phosphoenolpyruvate (PEP) to the 5-hydroxyl of shikimate-3-phosphate (S3P) to produce enolpyruvyl shikimate-3-phosphate and inorganic phosphate. The chain is 3-phosphoshikimate 1-carboxyvinyltransferase from Nitrosomonas eutropha (strain DSM 101675 / C91 / Nm57).